A 360-amino-acid chain; its full sequence is Photosystem II protein D1 (360 aa).

The next 3 membrane-spanning stretches (helical) occupy residues 29–46, 118–133, and 142–156; these read YIGWFGVLMIPTLLTATS, HFLLGVSCYIGREWEL, and WISVAFTAPVAAAAA. H118 contributes to the chlorophyll a binding site. Y126 contacts pheophytin a. The [CaMn4O5] cluster site is built by D170 and E189. A helical membrane pass occupies residues 197 to 218; it reads FHQLGVAGVFGGSLFSAMHGSL. Chlorophyll a is bound at residue H198. A quinone contacts are provided by residues H215 and 264-265; that span reads SF. H215 is a binding site for Fe cation. H272 contacts Fe cation. Residues 274-288 traverse the membrane as a helical segment; it reads FLGLWPVVGIWFTAM. [CaMn4O5] cluster-binding residues include H332, E333, D342, and A344. Residues 345–360 constitute a propeptide that is removed on maturation; that stretch reads SSNSLPVSLVAPSVNG.

The protein belongs to the reaction center PufL/M/PsbA/D family. PSII is composed of 1 copy each of membrane proteins PsbA, PsbB, PsbC, PsbD, PsbE, PsbF, PsbH, PsbI, PsbJ, PsbK, PsbL, PsbM, PsbT, PsbX, PsbY, PsbZ, Psb30/Ycf12, at least 3 peripheral proteins of the oxygen-evolving complex and a large number of cofactors. It forms dimeric complexes. It depends on The D1/D2 heterodimer binds P680, chlorophylls that are the primary electron donor of PSII, and subsequent electron acceptors. It shares a non-heme iron and each subunit binds pheophytin, quinone, additional chlorophylls, carotenoids and lipids. D1 provides most of the ligands for the Mn4-Ca-O5 cluster of the oxygen-evolving complex (OEC). There is also a Cl(-1) ion associated with D1 and D2, which is required for oxygen evolution. The PSII complex binds additional chlorophylls, carotenoids and specific lipids. as a cofactor. In terms of processing, tyr-161 forms a radical intermediate that is referred to as redox-active TyrZ, YZ or Y-Z. Post-translationally, C-terminally processed by CTPA; processing is essential to allow assembly of the oxygen-evolving complex and thus photosynthetic growth.

The protein localises to the plastid. It is found in the chloroplast thylakoid membrane. The catalysed reaction is 2 a plastoquinone + 4 hnu + 2 H2O = 2 a plastoquinol + O2. Functionally, photosystem II (PSII) is a light-driven water:plastoquinone oxidoreductase that uses light energy to abstract electrons from H(2)O, generating O(2) and a proton gradient subsequently used for ATP formation. It consists of a core antenna complex that captures photons, and an electron transfer chain that converts photonic excitation into a charge separation. The D1/D2 (PsbA/PsbD) reaction center heterodimer binds P680, the primary electron donor of PSII as well as several subsequent electron acceptors. In Gracilaria tenuistipitata var. liui (Red alga), this protein is Photosystem II protein D1.